The following is a 171-amino-acid chain: Shikimate kinase (171 aa).

Residue 14–19 (GAGKST) coordinates ATP. Mg(2+) is bound at residue Ser18. 3 residues coordinate substrate: Asp36, Arg60, and Gly82. Arg120 is an ATP binding site. Residue Arg139 participates in substrate binding. Gln156 lines the ATP pocket.

It belongs to the shikimate kinase family. In terms of assembly, monomer. The cofactor is Mg(2+).

The protein resides in the cytoplasm. It catalyses the reaction shikimate + ATP = 3-phosphoshikimate + ADP + H(+). It participates in metabolic intermediate biosynthesis; chorismate biosynthesis; chorismate from D-erythrose 4-phosphate and phosphoenolpyruvate: step 5/7. Functionally, catalyzes the specific phosphorylation of the 3-hydroxyl group of shikimic acid using ATP as a cosubstrate. This Shewanella amazonensis (strain ATCC BAA-1098 / SB2B) protein is Shikimate kinase.